The following is a 304-amino-acid chain: Glycine--tRNA ligase alpha subunit (304 aa).

Belongs to the class-II aminoacyl-tRNA synthetase family. In terms of assembly, tetramer of two alpha and two beta subunits.

It is found in the cytoplasm. The catalysed reaction is tRNA(Gly) + glycine + ATP = glycyl-tRNA(Gly) + AMP + diphosphate. This is Glycine--tRNA ligase alpha subunit from Afipia carboxidovorans (strain ATCC 49405 / DSM 1227 / KCTC 32145 / OM5) (Oligotropha carboxidovorans).